A 224-amino-acid chain; its full sequence is Phosphoglycolate phosphatase (224 aa).

D11 acts as the Nucleophile in catalysis. D11, D13, and D177 together coordinate Mg(2+).

Belongs to the HAD-like hydrolase superfamily. CbbY/CbbZ/Gph/YieH family. The cofactor is Mg(2+).

It catalyses the reaction 2-phosphoglycolate + H2O = glycolate + phosphate. It participates in organic acid metabolism; glycolate biosynthesis; glycolate from 2-phosphoglycolate: step 1/1. Functionally, specifically catalyzes the dephosphorylation of 2-phosphoglycolate. Is involved in the dissimilation of the intracellular 2-phosphoglycolate formed during the DNA repair of 3'-phosphoglycolate ends, a major class of DNA lesions induced by oxidative stress. The chain is Phosphoglycolate phosphatase from Mannheimia succiniciproducens (strain KCTC 0769BP / MBEL55E).